We begin with the raw amino-acid sequence, 258 residues long: Acyl-[acyl-carrier-protein]--UDP-N-acetylglucosamine O-acyltransferase (258 aa).

This sequence belongs to the transferase hexapeptide repeat family. LpxA subfamily. As to quaternary structure, homotrimer.

The protein localises to the cytoplasm. The enzyme catalyses a (3R)-hydroxyacyl-[ACP] + UDP-N-acetyl-alpha-D-glucosamine = a UDP-3-O-[(3R)-3-hydroxyacyl]-N-acetyl-alpha-D-glucosamine + holo-[ACP]. It participates in glycolipid biosynthesis; lipid IV(A) biosynthesis; lipid IV(A) from (3R)-3-hydroxytetradecanoyl-[acyl-carrier-protein] and UDP-N-acetyl-alpha-D-glucosamine: step 1/6. Functionally, involved in the biosynthesis of lipid A, a phosphorylated glycolipid that anchors the lipopolysaccharide to the outer membrane of the cell. The chain is Acyl-[acyl-carrier-protein]--UDP-N-acetylglucosamine O-acyltransferase from Pseudomonas aeruginosa (strain LESB58).